A 2036-amino-acid chain; its full sequence is Ral GTPase-activating protein subunit alpha-1 (2036 aa).

Disordered regions lie at residues 343–384 (LVSR…SSLC) and 476–497 (EEGEKREEENGTNTADHVRNSS). Basic and acidic residues predominate over residues 345–365 (SREESKNDNADKTDRTTEPEQ). Composition is skewed to polar residues over residues 366 to 384 (SHSNTSTLTEREPSSSSLC) and 486 to 497 (GTNTADHVRNSS). Residues Ser-711 and Ser-721 each carry the phosphoserine modification. The tract at residues 715 to 753 (SFSRGWSRDQPGQAPMRQRSATTTGSPGTEKARSIVRQK) is disordered. Position 754 is a phosphothreonine (Thr-754). Ser-773 is modified (phosphoserine). Thr-778 is subject to Phosphothreonine. Phosphoserine occurs at positions 797, 860, 861, and 864. Disordered stretches follow at residues 849–910 (SGNA…SDSH) and 982–1009 (TITGSESASPVHSPLGSRSQTPSPSTLN). A compositionally biased stretch (polar residues) spans 850–863 (GNASTMTRRGSSPG). A compositionally biased stretch (low complexity) spans 895 to 910 (SPASAGSSDLISSDSH). The segment covering 983 to 1009 (ITGSESASPVHSPLGSRSQTPSPSTLN) has biased composition (polar residues). Phosphoserine occurs at positions 986, 990, 994, and 1000. At Thr-1002 the chain carries Phosphothreonine. Phosphoserine is present on residues Ser-1004 and Ser-1478. The interval 1327-2035 (FTNKTVAHVA…PYHHLPSDAD (709 aa)) is minimal domain that binds to TCF3/E12. A coiled-coil region spans residues 1716–1744 (KQENDVINAILKQHTEEKEFVEKHFNDLN). Residues 1796 to 2004 (LRNLDSRQCR…EERARYLQTI (209 aa)) form the Rap-GAP domain.

Component of the heterodimeric RalGAP1 complex with RALGAPB. Heterodimerization is required for activity. Interacts with the HLH region of TCF3/isoform E12. In terms of tissue distribution, widely expressed.

It localises to the cytoplasm. The protein resides in the nucleus. Catalytic subunit of the heterodimeric RalGAP1 complex which acts as a GTPase activator for the Ras-like small GTPases RALA and RALB. This is Ral GTPase-activating protein subunit alpha-1 (RALGAPA1) from Homo sapiens (Human).